The chain runs to 181 residues: Adenine phosphoribosyltransferase (181 aa).

Belongs to the purine/pyrimidine phosphoribosyltransferase family. Homodimer.

It localises to the cytoplasm. The catalysed reaction is AMP + diphosphate = 5-phospho-alpha-D-ribose 1-diphosphate + adenine. Its pathway is purine metabolism; AMP biosynthesis via salvage pathway; AMP from adenine: step 1/1. In terms of biological role, catalyzes a salvage reaction resulting in the formation of AMP, that is energically less costly than de novo synthesis. The chain is Adenine phosphoribosyltransferase from Methylorubrum extorquens (strain CM4 / NCIMB 13688) (Methylobacterium extorquens).